The primary structure comprises 118 residues: Small ribosomal subunit protein uS13 (118 aa).

The disordered stretch occupies residues 94 to 118 (SLPLRGQRTKTNARTRKGPRKPIRK).

Belongs to the universal ribosomal protein uS13 family. As to quaternary structure, part of the 30S ribosomal subunit. Forms a loose heterodimer with protein S19. Forms two bridges to the 50S subunit in the 70S ribosome.

In terms of biological role, located at the top of the head of the 30S subunit, it contacts several helices of the 16S rRNA. In the 70S ribosome it contacts the 23S rRNA (bridge B1a) and protein L5 of the 50S subunit (bridge B1b), connecting the 2 subunits; these bridges are implicated in subunit movement. Contacts the tRNAs in the A and P-sites. The chain is Small ribosomal subunit protein uS13 from Shewanella baltica (strain OS223).